We begin with the raw amino-acid sequence, 108 residues long: Large ribosomal subunit protein uL24 (108 aa).

Belongs to the universal ribosomal protein uL24 family. Part of the 50S ribosomal subunit.

Its function is as follows. One of two assembly initiator proteins, it binds directly to the 5'-end of the 23S rRNA, where it nucleates assembly of the 50S subunit. In terms of biological role, one of the proteins that surrounds the polypeptide exit tunnel on the outside of the subunit. In Geobacter sulfurreducens (strain ATCC 51573 / DSM 12127 / PCA), this protein is Large ribosomal subunit protein uL24.